We begin with the raw amino-acid sequence, 156 residues long: Inorganic triphosphatase (156 aa).

A CYTH domain is found at 2–148 (GKEIEKKFIV…PRYLNSNLVK (147 aa)). The Proton acceptor role is filled by Tyr29.

Homodimer.

It carries out the reaction triphosphate + H2O = phosphate + diphosphate. The catalysed reaction is ATP + H2O = ADP + phosphate + H(+). In terms of biological role, involved in the hydrolysis of the beta-gamma-phosphoanhydride linkage of triphosphate-containing substrates (inorganic or nucleoside-linked). Catalyzes vigorously the hydrolysis of inorganic triphosphate (PPPi), however it can also catalyze the hydrolysis of ATP to ADP and phosphate. It can use ribonucleotides such as GTP, CTP, or UTP and deoxynucleotides such as dATP, dGTP, dCTP, and dTTP. The sequence is that of Inorganic triphosphatase from Acetivibrio thermocellus (strain ATCC 27405 / DSM 1237 / JCM 9322 / NBRC 103400 / NCIMB 10682 / NRRL B-4536 / VPI 7372) (Clostridium thermocellum).